The sequence spans 235 residues: Lipoprotein-releasing system ATP-binding protein LolD (235 aa).

Residues 13-235 (LCCSNIIKRY…SNGMLKISTI (223 aa)) form the ABC transporter domain. Position 49-56 (49-56 (GASGSGKS)) interacts with ATP.

Belongs to the ABC transporter superfamily. Lipoprotein translocase (TC 3.A.1.125) family. The complex is composed of two ATP-binding proteins (LolD) and two transmembrane proteins (LolC and LolE).

It is found in the cell inner membrane. Its function is as follows. Part of the ABC transporter complex LolCDE involved in the translocation of mature outer membrane-directed lipoproteins, from the inner membrane to the periplasmic chaperone, LolA. Responsible for the formation of the LolA-lipoprotein complex in an ATP-dependent manner. This is Lipoprotein-releasing system ATP-binding protein LolD from Blochmanniella floridana.